Reading from the N-terminus, the 143-residue chain is Large ribosomal subunit protein uL15 (143 aa).

The segment covering 1-13 has biased composition (basic residues); that stretch reads MIRKKKKVKKIRG. The tract at residues 1-39 is disordered; sequence MIRKKKKVKKIRGSRTCGGGSHKKRRGAGNKGGRGMAGG. Residues 29-38 are compositionally biased toward gly residues; sequence GNKGGRGMAG.

This sequence belongs to the universal ribosomal protein uL15 family. As to quaternary structure, part of the 50S ribosomal subunit.

Its function is as follows. Binds to the 23S rRNA. This Methanocaldococcus jannaschii (strain ATCC 43067 / DSM 2661 / JAL-1 / JCM 10045 / NBRC 100440) (Methanococcus jannaschii) protein is Large ribosomal subunit protein uL15.